A 1603-amino-acid chain; its full sequence is DNA polymerase theta (1603 aa).

The Helicase ATP-binding domain occupies 38-208 (EARQFEDQHL…WLDGAKVFEA (171 aa)). 51-58 (APTSAGKS) is an ATP binding site. The short motif at 149-152 (DEMH) is the DEAH box element. The Helicase C-terminal domain maps to 283–434 (TDSSLLEILK…GVLTRKRDAE (152 aa)).

Belongs to the DNA polymerase type-A family.

The protein localises to the nucleus. The catalysed reaction is DNA(n) + a 2'-deoxyribonucleoside 5'-triphosphate = DNA(n+1) + diphosphate. Its function is as follows. DNA polymerase that promotes microhomology-mediated end-joining (MMEJ), an alternative non-homologous end-joining (NHEJ) machinery triggered in response to double-strand breaks in DNA. MMEJ is an error-prone repair pathway that produces deletions of sequences from the strand being repaired and promotes genomic rearrangements, such as telomere fusions. Required to prevent extensive loss of sequences near G-quadruplex (G4) DNA sites, which are prone to cause genome alterations, by generating deletions. The protein is DNA polymerase theta of Caenorhabditis elegans.